A 270-amino-acid chain; its full sequence is Putative phosphoenolpyruvate synthase regulatory protein (270 aa).

Position 150–157 (150–157) interacts with ADP; that stretch reads GVSRCGKT.

Belongs to the pyruvate, phosphate/water dikinase regulatory protein family. PSRP subfamily.

It carries out the reaction [pyruvate, water dikinase] + ADP = [pyruvate, water dikinase]-phosphate + AMP + H(+). It catalyses the reaction [pyruvate, water dikinase]-phosphate + phosphate + H(+) = [pyruvate, water dikinase] + diphosphate. Bifunctional serine/threonine kinase and phosphorylase involved in the regulation of the phosphoenolpyruvate synthase (PEPS) by catalyzing its phosphorylation/dephosphorylation. The chain is Putative phosphoenolpyruvate synthase regulatory protein from Shewanella putrefaciens (strain CN-32 / ATCC BAA-453).